The chain runs to 706 residues: Choline transporter-like protein 2 (706 aa).

Over 1–33 (MGGERQHYYGKHGTPQKYDPTFKGPIYHRGCTD) the chain is Cytoplasmic. Position 14 is a phosphothreonine (Thr14). Residues 34-54 (VICCVFLLLAIVGYVAVGIIA) form a helical membrane-spanning segment. The Extracellular segment spans residues 55-232 (WTHGDPRKVI…RIFEDYTVSW (178 aa)). N-linked (GlcNAc...) asparagine glycosylation is found at Asn187 and Asn200. The chain crosses the membrane as a helical span at residues 233-253 (YWIIIGLVIAMVLSLLFIILL). The Cytoplasmic segment spans residues 254–256 (RFL). Residues 257 to 277 (AGIMVWVMIVMVILVLGYGIF) traverse the membrane as a helical segment. Topologically, residues 278-315 (HCYMEYSRLRGEAGSDISLVDLGFQTDLRVYLHLRQTW) are extracellular. Residues 316–336 (MAFMIILSILEVIIILLLIFL) form a helical membrane-spanning segment. The Cytoplasmic segment spans residues 337-364 (RKRILIAIALIKEASRAVGYVMCSMLYP). A helical membrane pass occupies residues 365–385 (LVTFLLLCLCIAYWASTAIFL). The Extracellular segment spans residues 386–440 (STSNEAVYKIFSDTDCQAVGKTCNPENFSSSSEFHLCPGAHCQFAFYGGESTYHR). The helical transmembrane segment at 441 to 461 (ALLGLQIFNAFMFFWLANFVL) threads the bilayer. Over 462 to 504 (ALGQVTLAGAFASYYWALKKPDDLPAFPLFSAFGRALRYHTGS) the chain is Cytoplasmic. Residues 505 to 525 (LAFGSLLLAIVQIIRVMLEYL) form a helical membrane-spanning segment. Residues 526 to 563 (DQRLKAAENKFAKFLMTCLKCCFWCLEKFIKFLNRNAY) are Extracellular-facing. The chain crosses the membrane as a helical span at residues 564–584 (IMIAIYGTNFCTSARNAFFLL). The Cytoplasmic portion of the chain corresponds to 585-599 (MRNIIRVAVLDKVTD). The helical transmembrane segment at 600–620 (FLFLLGKLLIVGSVGILAFFF) threads the bilayer. At 621 to 638 (FTHRIRIVQDTAPPLNYY) the chain is on the extracellular side. A helical membrane pass occupies residues 639 to 659 (WVPILTVIVGSYLIAHGFFSV). The Cytoplasmic portion of the chain corresponds to 660-706 (YGMCVDTLFLCFLEDLERNDGSMERPYFMSPTLKRLLNKTNRKPAES).

It belongs to the CTL (choline transporter-like) family. Interacts with COCH. Post-translationally, N-glycosylated.

Its subcellular location is the cell membrane. The protein localises to the mitochondrion outer membrane. The enzyme catalyses choline(out) + n H(+)(in) = choline(in) + n H(+)(out). The catalysed reaction is ethanolamine(out) + n H(+)(in) = ethanolamine(in) + n H(+)(out). In terms of biological role, choline/H+ antiporter, mainly in mitochodria. Also acts as a low-affinity ethanolamine/H+ antiporter, regulating the supply of extracellular ethanolamine (Etn) for the CDP-Etn pathway, redistribute intracellular Etn and balance the CDP-Cho and CDP-Etn arms of the Kennedy pathway. This Sus scrofa (Pig) protein is Choline transporter-like protein 2 (SLC44A2).